Consider the following 95-residue polypeptide: Co-chaperonin GroES (95 aa).

The protein belongs to the GroES chaperonin family. In terms of assembly, heptamer of 7 subunits arranged in a ring. Interacts with the chaperonin GroEL.

The protein resides in the cytoplasm. Its function is as follows. Together with the chaperonin GroEL, plays an essential role in assisting protein folding. The GroEL-GroES system forms a nano-cage that allows encapsulation of the non-native substrate proteins and provides a physical environment optimized to promote and accelerate protein folding. GroES binds to the apical surface of the GroEL ring, thereby capping the opening of the GroEL channel. This is Co-chaperonin GroES from Rhizorhabdus wittichii (strain DSM 6014 / CCUG 31198 / JCM 15750 / NBRC 105917 / EY 4224 / RW1) (Sphingomonas wittichii).